A 185-amino-acid chain; its full sequence is Iodate reductase subunit IdrB (185 aa).

Residues 1–46 (MTTHPIHLHHDDPAHGGERACMSRRSFLLAGGAMVTLASLPGTAVA) constitute a signal peptide (tat-type signal). Residues 69 to 168 (GEPLEFAYPY…LEVRGDDIYA (100 aa)) enclose the Rieske domain. 4 residues coordinate [2Fe-2S] cluster: C109, H111, C130, and H133.

Belongs to the AOX family. In terms of assembly, the iodate reductase (Idr) complex is composed of a molybdopterin-dependent iodate reductase (IdrA and IdrB subunits) and two associated peroxidases (IdrP1 and IdrP2). It depends on [2Fe-2S] cluster as a cofactor. Post-translationally, predicted to be exported by the Tat system. The position of the signal peptide cleavage has not been experimentally proven.

Its subcellular location is the periplasm. In terms of biological role, involved in iodate respiration. May accept electrons from cytochrome c551, and catalyze the reduction of iodate (IO(3)(-)) to produce the chemically unstable intermediate hypoiodous acid (HIO). This intermediate then undergoes abiotic disproportionation to yield two molecules of iodide (I(-)) and one molecule of iodate. The resultant iodate subsequently cycles back into the reductive pathway. The initial reduction of iodate may inadvertently produce low levels of incidental toxic H(2)O(2), which is detoxified by IdrP1 and IdrP2. The protein is Iodate reductase subunit IdrB of Denitromonas iodatirespirans.